Consider the following 89-residue polypeptide: Small ribosomal subunit protein uS14 (89 aa).

The protein belongs to the universal ribosomal protein uS14 family. As to quaternary structure, part of the 30S ribosomal subunit. Contacts proteins S3 and S10.

Functionally, binds 16S rRNA, required for the assembly of 30S particles and may also be responsible for determining the conformation of the 16S rRNA at the A site. The chain is Small ribosomal subunit protein uS14 from Chlorobium phaeovibrioides (strain DSM 265 / 1930) (Prosthecochloris vibrioformis (strain DSM 265)).